Reading from the N-terminus, the 338-residue chain is Ketol-acid reductoisomerase (NADP(+)) (338 aa).

The 181-residue stretch at 1–181 folds into the KARI N-terminal Rossmann domain; it reads MQVYYDKDCD…GGGRTGIIET (181 aa). NADP(+)-binding positions include 24-27, arginine 47, serine 50, serine 52, and 82-85; these read YGSQ and DEFQ. Histidine 107 is a catalytic residue. Residue glycine 133 participates in NADP(+) binding. The 146-residue stretch at 182–327 folds into the KARI C-terminal knotted domain; it reads TFKDETETDL…EKLRSMMPWI (146 aa). Mg(2+) is bound by residues aspartate 190, glutamate 194, glutamate 226, and glutamate 230. Serine 251 is a substrate binding site.

The protein belongs to the ketol-acid reductoisomerase family. Mg(2+) serves as cofactor.

It carries out the reaction (2R)-2,3-dihydroxy-3-methylbutanoate + NADP(+) = (2S)-2-acetolactate + NADPH + H(+). It catalyses the reaction (2R,3R)-2,3-dihydroxy-3-methylpentanoate + NADP(+) = (S)-2-ethyl-2-hydroxy-3-oxobutanoate + NADPH + H(+). The protein operates within amino-acid biosynthesis; L-isoleucine biosynthesis; L-isoleucine from 2-oxobutanoate: step 2/4. It participates in amino-acid biosynthesis; L-valine biosynthesis; L-valine from pyruvate: step 2/4. Its function is as follows. Involved in the biosynthesis of branched-chain amino acids (BCAA). Catalyzes an alkyl-migration followed by a ketol-acid reduction of (S)-2-acetolactate (S2AL) to yield (R)-2,3-dihydroxy-isovalerate. In the isomerase reaction, S2AL is rearranged via a Mg-dependent methyl migration to produce 3-hydroxy-3-methyl-2-ketobutyrate (HMKB). In the reductase reaction, this 2-ketoacid undergoes a metal-dependent reduction by NADPH to yield (R)-2,3-dihydroxy-isovalerate. This Hahella chejuensis (strain KCTC 2396) protein is Ketol-acid reductoisomerase (NADP(+)).